A 162-amino-acid chain; its full sequence is MIKTKKNRYEVYALGQHICMSPHKARRVIDQIRGRSYEETMMILELMPYRACYPILKLVYSAAANASHNMGFNERDLVISKAEVNQGTTVKKLKPRAQGRSYPIKRPTCSITIVLKNTSVNEEEFKRYQYTINQPGGLITKEKYTDMRCYDMYNNGGLWDKK.

It belongs to the universal ribosomal protein uL22 family. As to quaternary structure, part of the 50S ribosomal subunit.

Its subcellular location is the plastid. The protein resides in the chloroplast. Its function is as follows. This protein binds specifically to 23S rRNA. The globular domain of the protein is located near the polypeptide exit tunnel on the outside of the subunit, while an extended beta-hairpin is found that lines the wall of the exit tunnel in the center of the 70S ribosome. The protein is Large ribosomal subunit protein uL22c (rpl22) of Cucumis sativus (Cucumber).